A 267-amino-acid polypeptide reads, in one-letter code: MRILVEIAYQGNQFLGFQIQQQGRTVQQQFEKILKRMHKHHVRIHPSSRTDRGVHAYQQFFHFDTELNIDNKQWQYAMNRALPDDIYVKNVRNVDEYFHCRYDCVGKRYRYKVYQGNHRNPFKSGTETFVNETLDYDKMNKAAQEFIGTHDFTGFCSQKTEVESKVRTLYQSEIVATKEGFDYVVTGSGFLYNMVRVLVAFLIEVGKGKREPNDVPKLLEDKNRNNVPLTAPPDGLYLEKIYLSPEELIQEYGKDIKIHYKKSLEKH.

The Nucleophile role is filled by D51. Residue Y109 coordinates substrate.

This sequence belongs to the tRNA pseudouridine synthase TruA family. As to quaternary structure, homodimer.

The enzyme catalyses uridine(38/39/40) in tRNA = pseudouridine(38/39/40) in tRNA. Its function is as follows. Formation of pseudouridine at positions 38, 39 and 40 in the anticodon stem and loop of transfer RNAs. The protein is tRNA pseudouridine synthase A of Staphylococcus epidermidis (strain ATCC 12228 / FDA PCI 1200).